Reading from the N-terminus, the 360-residue chain is Phenylalanine--tRNA ligase alpha subunit (360 aa).

Position 260 (Glu-260) interacts with Mg(2+).

The protein belongs to the class-II aminoacyl-tRNA synthetase family. Phe-tRNA synthetase alpha subunit type 1 subfamily. Tetramer of two alpha and two beta subunits. The cofactor is Mg(2+).

Its subcellular location is the cytoplasm. The catalysed reaction is tRNA(Phe) + L-phenylalanine + ATP = L-phenylalanyl-tRNA(Phe) + AMP + diphosphate + H(+). This Rhizobium rhizogenes (strain K84 / ATCC BAA-868) (Agrobacterium radiobacter) protein is Phenylalanine--tRNA ligase alpha subunit.